The chain runs to 125 residues: uncharacterized protein (125 aa).

The chain crosses the membrane as a helical span at residues 21–43 (KFSLIALVSFTALAIIVLYHNIS).

It is found in the membrane. This is an uncharacterized protein from Archaeoglobus fulgidus (strain ATCC 49558 / DSM 4304 / JCM 9628 / NBRC 100126 / VC-16).